We begin with the raw amino-acid sequence, 586 residues long: YTH domain-containing family protein 2 (586 aa).

Disordered regions lie at residues 98-128 (LKEKVKQSRALRQSVNNAAEQQPSTKPQPVQ), 141-181 (SQDQ…KESP), and 301-464 (QGLA…PLVS). 3 stretches are compositionally biased toward polar residues: residues 107 to 128 (ALRQSVNNAAEQQPSTKPQPVQ), 169 to 181 (TLPTTPRTIKESP), and 352 to 368 (SSQAALSCKSKQSTDIQ). Over residues 398–418 (CARRHRSSSPRGRSGSHKSRR) the composition is skewed to basic residues. A compositionally biased stretch (polar residues) spans 421-436 (TDSPVSRSTTKSTPSR). The region spanning 435–576 (SRARQPGHRD…YCGRDLLRLM (142 aa)) is the YTH domain. Over residues 441–458 (GHRDYREYRDDRNRDTKP) the composition is skewed to basic and acidic residues.

This sequence belongs to the YTHDF family. YTHDF1 subfamily.

Functionally, specifically recognizes and binds N6-methyladenosine (m6A)-containing mRNAs, and regulates their stability. M6A is a modification present at internal sites of mRNAs and some non-coding RNAs and plays a role in mRNA stability and processing. Plays a role in pathogenicity towards plant host. This is YTH domain-containing family protein 2 from Pyricularia oryzae (strain 70-15 / ATCC MYA-4617 / FGSC 8958) (Rice blast fungus).